Here is a 610-residue protein sequence, read N- to C-terminus: Peptidyl-prolyl cis-trans isomerase 9 (610 aa).

S13 is modified (phosphoserine). WD repeat units follow at residues 45-83, 88-127, and 177-216; these read MHNA…VEYI, AHNA…LVNI, and KHTA…QKPD. A PPIase cyclophilin-type domain is found at 453–607; the sequence is LGKAAIIHTT…EPTKIINISI (155 aa).

The protein belongs to the cyclophilin-type PPIase family.

It is found in the nucleus. The enzyme catalyses [protein]-peptidylproline (omega=180) = [protein]-peptidylproline (omega=0). In terms of biological role, PPIases accelerate the folding of proteins. It catalyzes the cis-trans isomerization of proline imidic peptide bonds in oligopeptides. The chain is Peptidyl-prolyl cis-trans isomerase 9 (cyp9) from Schizosaccharomyces pombe (strain 972 / ATCC 24843) (Fission yeast).